Consider the following 325-residue polypeptide: Heat-inducible transcription repressor HrcA (325 aa).

The protein belongs to the HrcA family.

Functionally, negative regulator of class I heat shock genes (grpE-dnaK-dnaJ and groELS operons). Prevents heat-shock induction of these operons. This chain is Heat-inducible transcription repressor HrcA, found in Staphylococcus haemolyticus (strain JCSC1435).